A 208-amino-acid polypeptide reads, in one-letter code: Thymidylate kinase (208 aa).

ATP is bound at residue 10-17; sequence GPEGSGKT.

It belongs to the thymidylate kinase family.

It carries out the reaction dTMP + ATP = dTDP + ADP. Functionally, phosphorylation of dTMP to form dTDP in both de novo and salvage pathways of dTTP synthesis. In Bacillus cereus (strain ATCC 10987 / NRS 248), this protein is Thymidylate kinase.